A 607-amino-acid polypeptide reads, in one-letter code: MCGIIGIIGREDLSERLFQGLRRLEYRGYDSAGMCTIHDGKLDRRRAEGKLDNLGRVLANDPLPGKIGIAHTRWATHGAPTVANAHPHIAGDVAVVHNGIIENFKTLRDELLERGHHFESETDTEVVAHLLDEQMQAGKDPRHAVSKVLKKLRGAFALAILFKNYPDLLIGARLGSPLVVGYGDGENYLGSDALALAPLTQKISYLEEGDWVVLTREGIEVHDIEDRIVERPVVLSGASGLMVEKGNYRHFMQKEIFEQPVVVAQTLQSYLRPVEGQVALPDPDFDLSQIKRVTIVACGTSYYAGMVARYWIERFARVPVEIEAASEYRYREPVMEEGGLSLFISQSGETADTLAALRHARAGGQKIAVVVNVPTSSMAREADLLLPTHAGPEIGVASTKAFTCQLAVLAALATHIARVKGQLTQQEEQDIVRHLAEAPAALNAALAFNDTIENVATAIAPARDVLYIGRGPDYPLAMEGALKLKEISYIHAEGYAAGEMKHGPIALIDDKVPIIVLAPSGPLFEKTVSNMQEMQARGGKVILISDEKGIQEAGDNCLATLTMPKVHPLIAPIVYAIPVQLLAYHVAVIKGTDVDQPRNLAKSVTVE.

Cysteine 2 (nucleophile; for GATase activity) is an active-site residue. The Glutamine amidotransferase type-2 domain occupies 2–217 (CGIIGIIGRE…EGDWVVLTRE (216 aa)). SIS domains are found at residues 283 to 422 (PDFD…VKGQ) and 455 to 597 (VATA…VDQP). Lysine 602 serves as the catalytic For Fru-6P isomerization activity.

Homodimer.

It localises to the cytoplasm. It carries out the reaction D-fructose 6-phosphate + L-glutamine = D-glucosamine 6-phosphate + L-glutamate. Catalyzes the first step in hexosamine metabolism, converting fructose-6P into glucosamine-6P using glutamine as a nitrogen source. The chain is Glutamine--fructose-6-phosphate aminotransferase [isomerizing] from Zymomonas mobilis subsp. mobilis (strain ATCC 31821 / ZM4 / CP4).